The following is a 92-amino-acid chain: Bombyxin A-1 (92 aa).

Positions 1-19 (MKILLAIALMLSTVMWVST) are cleaved as a signal peptide. The residue at position 20 (Gln-20) is a Pyrrolidone carboxylic acid. Disulfide bonds link Cys-29/Cys-79, Cys-41/Cys-92, and Cys-78/Cys-83. A propeptide spans 50–70 (SGAQFASYGSAWLMPYSEGRG) (c peptide like).

It belongs to the insulin family. Heterodimer of a B chain and an A chain linked by two disulfide bonds.

It is found in the secreted. In terms of biological role, brain peptide responsible for activation of prothoracic glands to produce ecdysone in insects. This chain is Bombyxin A-1 (BBXA1), found in Bombyx mori (Silk moth).